Consider the following 595-residue polypeptide: Actin-histidine N-methyltransferase (595 aa).

Residues 1–22 (MGKKSRVKTQKSGTGATATVSP) are disordered. Residues 10 to 20 (QKSGTGATATV) are compositionally biased toward polar residues. Residues R75, 104-106 (EGF), R254, 275-279 (DMCNH), and 325-327 (SGF) contribute to the S-adenosyl-L-methionine site. The region spanning 94 to 314 (EGFEMVNFKE…AGEQIYIFYG (221 aa)) is the SET domain. S513 is subject to Phosphoserine. Positions 549–572 (ENGLVNGENSVPNGTRSENENLNQ) are enriched in polar residues. Residues 549 to 595 (ENGLVNGENSVPNGTRSENENLNQEESKRAVEDAKGSSSDNTAEVKE) form a disordered region. Positions 573–583 (EESKRAVEDAK) are enriched in basic and acidic residues. Polar residues predominate over residues 584 to 595 (GSSSDNTAEVKE).

It belongs to the class V-like SAM-binding methyltransferase superfamily. SETD3 actin-histidine methyltransferase family. In terms of assembly, interacts with MYOD1. Post-translationally, phosphorylated by GSK3B, which is required for recognition by the SCF(FBXW7) complex and subsequent degradation. In terms of processing, ubiquitinated by the SCF(FBXW7) complex following phosphorylation by GSK3B, leading to its degradation by the proteasome.

It localises to the cytoplasm. The protein resides in the nucleus. The catalysed reaction is L-histidyl-[protein] + S-adenosyl-L-methionine = N(tele)-methyl-L-histidyl-[protein] + S-adenosyl-L-homocysteine + H(+). Protein-histidine N-methyltransferase that specifically mediates 3-methylhistidine (tele-methylhistidine) methylation of actin at 'His-73'. Histidine methylation of actin is required for smooth muscle contraction of the laboring uterus during delivery. Does not have protein-lysine N-methyltransferase activity and probably only catalyzes histidine methylation of actin. The protein is Actin-histidine N-methyltransferase of Papio anubis (Olive baboon).